The following is a 75-amino-acid chain: Large ribosomal subunit protein bL31 (75 aa).

Belongs to the bacterial ribosomal protein bL31 family. Type A subfamily. As to quaternary structure, part of the 50S ribosomal subunit.

Its function is as follows. Binds the 23S rRNA. This chain is Large ribosomal subunit protein bL31, found in Zymomonas mobilis subsp. mobilis (strain ATCC 31821 / ZM4 / CP4).